The sequence spans 253 residues: Toxin PezT (253 aa).

ATP is bound at residue 39 to 46 (GQSGAGKT). The Proton acceptor role is filled by Asp-66.

This sequence belongs to the zeta toxin family. Forms a PezA(2)PezT(2) heterotetramer. The heterotetramer is much more stable than either of the proteins alone, and a specific mechanism may be necessary to liberate the toxin.

The enzyme catalyses UDP-N-acetyl-alpha-D-glucosamine + ATP = UDP-N-acetyl-alpha-D-glucosamine 3'-phosphate + ADP + H(+). Functionally, toxic component of a type II toxin-antitoxin (TA) system. Phosphorylates UDP-N-acetyl-D-glucosamine (UNAG) on the 3'-hydroxyl group of the N-acetyl-D-glucosamine moiety, yielding UNAG-3P. UNAG-3P inhibits MurA, the first committed step in cell wall synthesis, which is then blocked. Upon expression in E.coli results in decreased cell growth and viability, followed 3 hours later by growth restoration; the toxic effect and phosphorylation of UNAG are neutralized by coexpression with cognate antitoxin PezA. A mutant lacking the last 11 residues is stably maintained in E.coli, unlike the wild-type which undergoes spontaneous mutation. Expression of the deletion mutant in rapidly growing liquid cultures leads to cell bulging, permeabilization and massive lysis by 1 hour. Cells that survive are not able to undergo cytokinesis. Expression in slowly growing cells leads to bulging but not lysis. In terms of biological role, acts as a corepressor of its own operon with PezA; it is not clear if it binds DNA alone. The polypeptide is Toxin PezT (pezT) (Streptococcus pneumoniae serotype 4 (strain ATCC BAA-334 / TIGR4)).